We begin with the raw amino-acid sequence, 431 residues long: Histidinol dehydrogenase (431 aa).

Residues Tyr-127, Gln-189, and Asn-212 each contribute to the NAD(+) site. Positions 237, 259, and 262 each coordinate substrate. Residues Gln-259 and His-262 each contribute to the Zn(2+) site. Catalysis depends on proton acceptor residues Glu-326 and His-327. Substrate-binding residues include His-327, Asp-360, Glu-414, and His-419. Asp-360 contacts Zn(2+). His-419 contributes to the Zn(2+) binding site.

The protein belongs to the histidinol dehydrogenase family. Zn(2+) is required as a cofactor.

The enzyme catalyses L-histidinol + 2 NAD(+) + H2O = L-histidine + 2 NADH + 3 H(+). Its pathway is amino-acid biosynthesis; L-histidine biosynthesis; L-histidine from 5-phospho-alpha-D-ribose 1-diphosphate: step 9/9. In terms of biological role, catalyzes the sequential NAD-dependent oxidations of L-histidinol to L-histidinaldehyde and then to L-histidine. This Xanthomonas axonopodis pv. citri (strain 306) protein is Histidinol dehydrogenase.